Here is a 366-residue protein sequence, read N- to C-terminus: Glycine betaine monooxygenase reductase subunit (366 aa).

Residues 16 to 119 (NGRHLVRCVK…HGPVGLFNAI (104 aa)) form the FAD-binding FR-type domain. A 2Fe-2S ferredoxin-type domain is found at 282-366 (HQVEFTATGK…VPKGDVVIDY (85 aa)). Residues Cys-316, Cys-321, Cys-324, and Cys-354 each contribute to the [2Fe-2S] cluster site.

The protein in the N-terminal section; belongs to the FAD-binding oxidoreductase type 6 family. As to quaternary structure, the system is composed of an oxygenase subunit (GbcA) and a reductase subunit (GbcB). The cofactor is FAD. It depends on [2Fe-2S] cluster as a cofactor.

It carries out the reaction glycine betaine + NADH + O2 + H(+) = N,N-dimethylglycine + formaldehyde + NAD(+) + H2O. Functionally, involved in degradation of glycine betaine. Part of a Rieske-type oxygenase system that catalyzes the conversion of glycine betaine (GB) to dimethylglycine (DMG). This subunit is the ferredoxin reductase component of the system. Required for growth on choline and GB, but not for growth on DMG. This chain is Glycine betaine monooxygenase reductase subunit, found in Pseudomonas aeruginosa (strain ATCC 15692 / DSM 22644 / CIP 104116 / JCM 14847 / LMG 12228 / 1C / PRS 101 / PAO1).